A 314-amino-acid polypeptide reads, in one-letter code: Ribosomal RNA small subunit methyltransferase H (314 aa).

Residues glycine 37–histidine 39, aspartate 56, phenylalanine 86, aspartate 108, and histidine 115 each bind S-adenosyl-L-methionine.

This sequence belongs to the methyltransferase superfamily. RsmH family.

Its subcellular location is the cytoplasm. The catalysed reaction is cytidine(1402) in 16S rRNA + S-adenosyl-L-methionine = N(4)-methylcytidine(1402) in 16S rRNA + S-adenosyl-L-homocysteine + H(+). In terms of biological role, specifically methylates the N4 position of cytidine in position 1402 (C1402) of 16S rRNA. In Leptospira biflexa serovar Patoc (strain Patoc 1 / ATCC 23582 / Paris), this protein is Ribosomal RNA small subunit methyltransferase H.